The following is a 128-amino-acid chain: Early 3 14.7 kDa protein (128 aa).

It belongs to the adenoviridae E3_15 family. As to quaternary structure, may bind to host IKBKG, OPTN and RRAGA.

Its subcellular location is the host cytoplasm. It localises to the host nucleus. Its function is as follows. May prevent Nf-kappaB activation by immune signals like Tumor necrosis factor, presumably by inhibiting NFKB1 dimer DNA-binding. May act directly at the TNF receptor to inhibit signaling. In Human adenovirus C serotype 2 (HAdV-2), this protein is Early 3 14.7 kDa protein.